The chain runs to 126 residues: Histone H2B type 1-H (126 aa).

Residues Met1–Lys12 are compositionally biased toward low complexity. Positions Met1 to Glu36 are disordered. Pro2 is subject to N-acetylproline. Lys6 is subject to N6-(2-hydroxyisobutyryl)lysine; alternate. The residue at position 6 (Lys6) is an N6-(beta-hydroxybutyryl)lysine; alternate. At Lys6 the chain carries N6-acetyllysine; alternate. Lys6 is subject to N6-butyryllysine; alternate. An N6-crotonyllysine; alternate modification is found at Lys6. Position 6 is an N6-lactoyllysine; alternate (Lys6). Lys6 participates in a covalent cross-link: Glycyl lysine isopeptide (Lys-Gly) (interchain with G-Cter in SUMO2); alternate. Ser7 is modified (ADP-ribosylserine). Position 12 is an N6-(beta-hydroxybutyryl)lysine; alternate (Lys12). N6-acetyllysine; alternate is present on residues Lys12 and Lys13. Lys12 and Lys13 each carry N6-crotonyllysine; alternate. Lys12 bears the N6-lactoyllysine; alternate mark. Lys13 carries the post-translational modification N6-(2-hydroxyisobutyryl)lysine; alternate. A Phosphoserine; by STK4/MST1 modification is found at Ser15. An N6-acetyllysine; alternate mark is found at Lys16, Lys17, Lys21, and Lys24. 4 positions are modified to N6-crotonyllysine; alternate: Lys16, Lys17, Lys21, and Lys24. Residues Lys16, Lys17, Lys21, and Lys24 each carry the N6-lactoyllysine; alternate modification. An N6-(beta-hydroxybutyryl)lysine; alternate mark is found at Lys17 and Lys21. An N6-glutaryllysine; alternate modification is found at Lys17. Residues Lys21 and Lys24 each carry the N6-(2-hydroxyisobutyryl)lysine; alternate modification. The residue at position 21 (Lys21) is an N6-butyryllysine; alternate. Lys21 is covalently cross-linked (Glycyl lysine isopeptide (Lys-Gly) (interchain with G-Cter in SUMO2); alternate). Residue Lys25 is modified to N6-(2-hydroxyisobutyryl)lysine. The residue at position 35 (Lys35) is an N6-(2-hydroxyisobutyryl)lysine; alternate. The residue at position 35 (Lys35) is an N6-(beta-hydroxybutyryl)lysine; alternate. Lys35 is subject to N6-crotonyllysine; alternate. Lys35 carries the post-translational modification N6-glutaryllysine; alternate. Position 35 is an N6-succinyllysine; alternate (Lys35). Lys35 participates in a covalent cross-link: Glycyl lysine isopeptide (Lys-Gly) (interchain with G-Cter in ubiquitin); alternate. Glu36 is modified (polyADP-ribosyl glutamic acid). The residue at position 37 (Ser37) is a Phosphoserine; by AMPK. An N6-(2-hydroxyisobutyryl)lysine; alternate mark is found at Lys44, Lys47, and Lys58. Lys44 is subject to N6-lactoyllysine; alternate. N6-glutaryllysine; alternate is present on residues Lys44 and Lys47. Lys47 bears the N6-methyllysine; alternate mark. An N6,N6-dimethyllysine; alternate modification is found at Lys58. At Arg80 the chain carries Dimethylated arginine. Position 86 is an N6-(2-hydroxyisobutyryl)lysine; alternate (Lys86). N6-(beta-hydroxybutyryl)lysine; alternate is present on Lys86. Lys86 is modified (N6-acetyllysine; alternate). An N6-lactoyllysine; alternate modification is found at Lys86. Lys86 is modified (N6,N6,N6-trimethyllysine; alternate). Arg87 and Arg93 each carry omega-N-methylarginine. Lys109 carries the post-translational modification N6-(2-hydroxyisobutyryl)lysine; alternate. At Lys109 the chain carries N6-lactoyllysine; alternate. At Lys109 the chain carries N6-glutaryllysine; alternate. Lys109 carries the N6-methyllysine; alternate modification. Ser113 is a glycosylation site (O-linked (GlcNAc) serine). Thr116 is subject to Phosphothreonine. An N6-(2-hydroxyisobutyryl)lysine; alternate mark is found at Lys117 and Lys121. N6-(beta-hydroxybutyryl)lysine; alternate occurs at positions 117 and 121. N6-lactoyllysine; alternate occurs at positions 117 and 121. N6-glutaryllysine; alternate is present on residues Lys117 and Lys121. Residues Lys117 and Lys121 each carry the N6-succinyllysine; alternate modification. An N6-malonyllysine; alternate modification is found at Lys117. The residue at position 117 (Lys117) is an N6-methylated lysine; alternate. Lys121 participates in a covalent cross-link: Glycyl lysine isopeptide (Lys-Gly) (interchain with G-Cter in ubiquitin); alternate.

This sequence belongs to the histone H2B family. The nucleosome is a histone octamer containing two molecules each of H2A, H2B, H3 and H4 assembled in one H3-H4 heterotetramer and two H2A-H2B heterodimers. The octamer wraps approximately 147 bp of DNA. Found in a complex with PPAR9; DTX3L AND STAT1; the interaction is likely to induce DTX3L-mediated ubiquitination of H2BC9/H2BJ. In terms of processing, monoubiquitination at Lys-35 (H2BK34Ub) by the MSL1/MSL2 dimer is required for histone H3 'Lys-4' (H3K4me) and 'Lys-79' (H3K79me) methylation and transcription activation at specific gene loci, such as HOXA9 and MEIS1 loci. Similarly, monoubiquitination at Lys-121 (H2BK120Ub) by the RNF20/40 complex gives a specific tag for epigenetic transcriptional activation and is also prerequisite for histone H3 'Lys-4' and 'Lys-79' methylation. It also functions cooperatively with the FACT dimer to stimulate elongation by RNA polymerase II. H2BK120Ub also acts as a regulator of mRNA splicing: deubiquitination by USP49 is required for efficient cotranscriptional splicing of a large set of exons. Monoubiquitinated by DTX3L upon encephalomyocarditis virus (EMCV)-mediated infection. Phosphorylation at Ser-37 (H2BS36ph) by AMPK in response to stress promotes transcription. Phosphorylated on Ser-15 (H2BS14ph) by STK4/MST1 during apoptosis; which facilitates apoptotic chromatin condensation. Also phosphorylated on Ser-15 in response to DNA double strand breaks (DSBs), and in correlation with somatic hypermutation and immunoglobulin class-switch recombination. Post-translationally, glcNAcylation at Ser-113 promotes monoubiquitination of Lys-121. It fluctuates in response to extracellular glucose, and associates with transcribed genes. In terms of processing, ADP-ribosylated by PARP1 or PARP2 on Ser-7 (H2BS6ADPr) in response to DNA damage. H2BS6ADPr promotes recruitment of CHD1L. Poly ADP-ribosylation on Glu-36 (H2BE35ADPr) by PARP1 regulates adipogenesis: it inhibits phosphorylation at Ser-37 (H2BS36ph), thereby blocking expression of pro-adipogenetic genes. Crotonylation (Kcr) is specifically present in male germ cells and marks testis-specific genes in post-meiotic cells, including X-linked genes that escape sex chromosome inactivation in haploid cells. Crotonylation marks active promoters and enhancers and confers resistance to transcriptional repressors. It is also associated with post-meiotically activated genes on autosomes. Post-translationally, lactylated in macrophages by EP300/P300 by using lactoyl-CoA directly derived from endogenous or exogenous lactate, leading to stimulates gene transcription.

Its subcellular location is the nucleus. The protein resides in the chromosome. Functionally, core component of nucleosome. Nucleosomes wrap and compact DNA into chromatin, limiting DNA accessibility to the cellular machineries which require DNA as a template. Histones thereby play a central role in transcription regulation, DNA repair, DNA replication and chromosomal stability. DNA accessibility is regulated via a complex set of post-translational modifications of histones, also called histone code, and nucleosome remodeling. This is Histone H2B type 1-H from Homo sapiens (Human).